Here is a 483-residue protein sequence, read N- to C-terminus: Cobyric acid synthase (483 aa).

Residues 251 to 438 (ALIVAVPMLP…LHGVFSADRF (188 aa)) form the GATase cobBQ-type domain. The active-site Nucleophile is the C333. The active site involves H430.

The protein belongs to the CobB/CobQ family. CobQ subfamily.

The protein operates within cofactor biosynthesis; adenosylcobalamin biosynthesis. In terms of biological role, catalyzes amidations at positions B, D, E, and G on adenosylcobyrinic A,C-diamide. NH(2) groups are provided by glutamine, and one molecule of ATP is hydrogenolyzed for each amidation. This is Cobyric acid synthase from Brucella suis biovar 1 (strain 1330).